Reading from the N-terminus, the 980-residue chain is Envelope glycoprotein B (980 aa).

Over residues 1–14 the composition is skewed to polar residues; the sequence is MSSGCRSVGGSTWG. Disordered regions lie at residues 1–20 and 88–118; these read MSSG…RGDG and TTPS…TETP. A signal peptide spans 1 to 86; it reads MSSGCRSVGG…LFGSCVVRAV (86 aa). Topologically, residues 87-849 are virion surface; sequence PTTPSPPTST…SGIASFLNNP (763 aa). Low complexity predominate over residues 96–118; sequence TPTSMSTHSHGTVDPTLLPTETP. 5 cysteine pairs are disulfide-bonded: Cys140–Cys647, Cys157–Cys603, Cys231–Cys296, Cys389–Cys437, and Cys668–Cys708. The N-linked (GlcNAc...) asparagine; by host glycan is linked to Asn165. The interval 197-203 is involved in fusion and/or binding to host membrane; sequence VWKGYSH. N-linked (GlcNAc...) asparagine; by host glycosylation occurs at Asn275. The interval 282–290 is involved in fusion and/or binding to host membrane; the sequence is GWMPWRHYT. N-linked (GlcNAc...) asparagine; by host glycans are attached at residues Asn380, Asn423, Asn497, Asn514, Asn515, and Asn560. A compositionally biased stretch (low complexity) spans 505–516; the sequence is LLNPNANNNNNT. Positions 505–535 are disordered; it reads LLNPNANNNNNTTRRRRSLLSVPEPQPTQDG. Asn727 and Asn749 each carry an N-linked (GlcNAc...) asparagine; by host glycan. Hydrophobic membrane proximal region stretches follow at residues 794-847 and 823-843; these read IDSV…SFLN and AVGT…SGIA. The helical transmembrane segment at 850–870 threads the bilayer; sequence FGGLAIGLLVIAGLVAAFFAY. Residues 871 to 980 lie on the Intravirion side of the membrane; it reads RYVMQIRSNP…NDTMENEKMV (110 aa). The short motif at 925–928 is the Golgi targeting element; that stretch reads YMSM. The N-linked (GlcNAc...) asparagine; by host glycan is linked to Asn952. Residues 965–968 carry the Internalization motif motif; sequence YTRL. Residue Asn971 is glycosylated (N-linked (GlcNAc...) asparagine; by host).

Belongs to the herpesviridae glycoprotein B family. In terms of assembly, homotrimer; disulfide-linked. Binds to heparan sulfate proteoglycans. Interacts with gH/gL heterodimer. In terms of processing, a proteolytic cleavage by host furin generates two subunits that remain linked by disulfide bonds.

It localises to the virion membrane. Its subcellular location is the host cell membrane. It is found in the host endosome membrane. The protein localises to the host Golgi apparatus membrane. Envelope glycoprotein that forms spikes at the surface of virion envelope. Essential for the initial attachment to heparan sulfate moieties of the host cell surface proteoglycans. Involved in fusion of viral and cellular membranes leading to virus entry into the host cell. Following initial binding to its host receptors, membrane fusion is mediated by the fusion machinery composed at least of gB and the heterodimer gH/gL. May be involved in the fusion between the virion envelope and the outer nuclear membrane during virion egress. The sequence is that of Envelope glycoprotein B from Equine herpesvirus 1 (strain HVS25A) (EHV-1).